The chain runs to 353 residues: WD repeat-containing protein 55 (353 aa).

WD repeat units follow at residues 4 to 43 (DLGA…SLVR), 49 to 88 (AHKE…QVAH), 92 to 130 (AHED…CSHE), 133 to 172 (AHED…VQSQ), 175 to 214 (FSED…DCSD), 218 to 257 (DLAP…IIQP), and 260 to 299 (SHDY…EGSN). The interval 300 to 353 (VNSGNASGAAEDSDSDNDGMDLDNDPSKSSKGSKRKTKSKANTLNATNNFFADL) is disordered. Residues 310–323 (EDSDSDNDGMDLDN) show a composition bias toward acidic residues. Residues 339–353 (KANTLNATNNFFADL) show a composition bias toward low complexity.

It belongs to the WD repeat WDR55 family. As to quaternary structure, interacts with DDB1A. In terms of tissue distribution, highly expressed in roots. Expressed in cotyledons, leaves, buds and flowers.

The protein resides in the nucleus. Its subcellular location is the cytoplasm. In terms of biological role, required for male and female gametogenesis, seed development, and embryo and endosperm development at early stages. Involved in the establishment of bilateral symmetry in the transition from the globular to the heart embryo stage. May act in the frame of a CRL4 complex. Required for proper vegetative growth and organization of the adult plant body. May play a role in hormonal control of plant development. The protein is WD repeat-containing protein 55 of Arabidopsis thaliana (Mouse-ear cress).